Consider the following 160-residue polypeptide: Large ribosomal subunit protein eL21B (160 aa).

A Glycyl lysine isopeptide (Lys-Gly) (interchain with G-Cter in ubiquitin) cross-link involves residue Lys-32.

This sequence belongs to the eukaryotic ribosomal protein eL21 family. Component of the large ribosomal subunit (LSU). Mature yeast ribosomes consist of a small (40S) and a large (60S) subunit. The 40S small subunit contains 1 molecule of ribosomal RNA (18S rRNA) and 33 different proteins (encoded by 57 genes). The large 60S subunit contains 3 rRNA molecules (25S, 5.8S and 5S rRNA) and 46 different proteins (encoded by 81 genes).

It localises to the cytoplasm. Functionally, component of the ribosome, a large ribonucleoprotein complex responsible for the synthesis of proteins in the cell. The small ribosomal subunit (SSU) binds messenger RNAs (mRNAs) and translates the encoded message by selecting cognate aminoacyl-transfer RNA (tRNA) molecules. The large subunit (LSU) contains the ribosomal catalytic site termed the peptidyl transferase center (PTC), which catalyzes the formation of peptide bonds, thereby polymerizing the amino acids delivered by tRNAs into a polypeptide chain. The nascent polypeptides leave the ribosome through a tunnel in the LSU and interact with protein factors that function in enzymatic processing, targeting, and the membrane insertion of nascent chains at the exit of the ribosomal tunnel. This is Large ribosomal subunit protein eL21B from Saccharomyces cerevisiae (strain ATCC 204508 / S288c) (Baker's yeast).